The primary structure comprises 804 residues: Pentatricopeptide repeat-containing protein At4g35130, chloroplastic (804 aa).

The transit peptide at 1 to 19 directs the protein to the chloroplast; it reads MAATLLSQCYRIYNSDACK. 16 PPR repeats span residues 63–93, 94–128, 129–163, 164–194, 195–229, 230–264, 266–296, 297–332, 333–363, 364–394, 395–429, 430–464, 465–495, 496–530, 531–561, and 567–597; these read NDPALTRALRGFADSRLMEDALQLFDEMNKA, DAFLWNVMIKGFTSCGLYIEAVQFYSRMVFAGVKA, DTFTYPFVIKSVAGISSLEEGKKIHAMVIKLGFVS, DVYVCNSLISLYMKLGCAWDAEKVFEEMPER, DIVSWNSMISGYLALGDGFSSLMLFKEMLKCGFKP, DRFSTMSALGACSHVYSPKMGKEIHCHAVRSRIET, DVMVMTSILDMYSKYGEVSYAERIFNGMIQR, NIVAWNVMIGCYARNGRVTDAFLCFQKMSEQNGLQP, DVITSINLLPASAILEGRTIHGYAMRRGFLP, HMVLETALIDMYGECGQLKSAEVIFDRMAEK, NVISWNSIIAAYVQNGKNYSALELFQELWDSSLVP, DSTTIASILPAYAESLSLSEGREIHAYIVKSRYWS, NTIILNSLVHMYAMCGDLEDARKCFNHILLK, DVVSWNSIIMAYAVHGFGRISVWLFSEMIASRVNP, NKSTFASLLAACSISGMVDEGWEYFESMKRE, and GIEHYGCMLDLIGRTGNFSAAKRFLEEMPFV. Positions 602–677 are type E motif; the sequence is IWGSLLNASR…TSSRSTVEAK (76 aa). A type E(+) motif region spans residues 678–708; sequence GKSHVFTNGDRSHVATNKIYEVLDVVSRMVG. Residues 710–804 form a type DYW motif region; the sequence is EDIYVHCVSR…NGRCSCGNYW (95 aa).

The protein belongs to the PPR family. PCMP-H subfamily.

It localises to the plastid. It is found in the chloroplast. This chain is Pentatricopeptide repeat-containing protein At4g35130, chloroplastic (PCMP-H27), found in Arabidopsis thaliana (Mouse-ear cress).